The sequence spans 433 residues: Glutamate-1-semialdehyde 2,1-aminomutase (433 aa).

An N6-(pyridoxal phosphate)lysine modification is found at lysine 273.

This sequence belongs to the class-III pyridoxal-phosphate-dependent aminotransferase family. HemL subfamily. Homodimer. Pyridoxal 5'-phosphate serves as cofactor.

The protein resides in the cytoplasm. It catalyses the reaction (S)-4-amino-5-oxopentanoate = 5-aminolevulinate. Its pathway is porphyrin-containing compound metabolism; protoporphyrin-IX biosynthesis; 5-aminolevulinate from L-glutamyl-tRNA(Glu): step 2/2. It participates in porphyrin-containing compound metabolism; chlorophyll biosynthesis. In Crocosphaera subtropica (strain ATCC 51142 / BH68) (Cyanothece sp. (strain ATCC 51142)), this protein is Glutamate-1-semialdehyde 2,1-aminomutase.